The primary structure comprises 522 residues: Leucine-rich repeat transmembrane neuronal protein 1 (522 aa).

Residues 1–34 (MDFLLLGLCLYWLLRRPSGVVLCLLGACFQMLPA) form the signal peptide. An LRRNT domain is found at 35 to 63 (APSGCPQLCRCEGRLLYCEALNPTEAPHN). The Extracellular segment spans residues 35–427 (APSGCPQLCR…HAENAVQIHK (393 aa)). An N-linked (GlcNAc...) asparagine glycan is attached at Asn-63. LRR repeat units lie at residues 64–87 (LSGL…QFTG), 89–111 (MQLT…AFQK), 112–135 (LRRV…TFRP), 137–159 (PNLR…LFHG), 161–183 (RKLT…IFQD), 184–207 (CRSL…SFAG), 209–231 (FKLT…HFPR), 233–255 (ISLH…LDWV), 256–278 (WNLK…VFET), and 279–302 (VPHL…ILNS). N-linked (GlcNAc...) asparagine glycosylation occurs at Asn-130. In terms of domain architecture, LRRCT spans 314–365 (NLWDCGRNVCALASWLSNFQGRYDGNLQCASPEYAQGEDVLDAVYAFHLCED). Residue Asn-380 is glycosylated (N-linked (GlcNAc...) asparagine). The interval 382 to 401 (SDLGPPASSATTLADGGEGQ) is disordered. Residues 428 to 448 (VVTGTMALIFSFLIVVLVLYV) form a helical membrane-spanning segment. Residues 449 to 522 (SWKCFPASLR…HQQPARECEV (74 aa)) are Cytoplasmic-facing.

Belongs to the LRRTM family.

The protein localises to the cell membrane. It is found in the postsynaptic cell membrane. Functionally, exhibits strong synaptogenic activity, restricted to excitatory presynaptic differentiation, acting at both pre- and postsynaptic level. The sequence is that of Leucine-rich repeat transmembrane neuronal protein 1 (LRRTM1) from Pongo abelii (Sumatran orangutan).